Reading from the N-terminus, the 597-residue chain is DNA polymerase III subunit gamma/tau (597 aa).

ATP is bound at residue 44–51; the sequence is GERGTGKT. 4 residues coordinate Zn(2+): Cys-63, Cys-72, Cys-75, and Cys-78.

The protein belongs to the DnaX/STICHEL family. As to quaternary structure, DNA polymerase III contains a core (composed of alpha, epsilon and theta chains) that associates with a tau subunit. This core dimerizes to form the POLIII' complex. PolIII' associates with the gamma complex (composed of gamma, delta, delta', psi and chi chains) and with the beta chain to form the complete DNA polymerase III complex.

The enzyme catalyses DNA(n) + a 2'-deoxyribonucleoside 5'-triphosphate = DNA(n+1) + diphosphate. Functionally, DNA polymerase III is a complex, multichain enzyme responsible for most of the replicative synthesis in bacteria. This DNA polymerase also exhibits 3' to 5' exonuclease activity. This is DNA polymerase III subunit gamma/tau (dnaX) from Mycoplasma genitalium (strain ATCC 33530 / DSM 19775 / NCTC 10195 / G37) (Mycoplasmoides genitalium).